Reading from the N-terminus, the 283-residue chain is Non-selective voltage-gated ion channel VDAC3 (283 aa).

Residue Cys-2 is modified to N-acetylcysteine. A Phosphothreonine modification is found at Thr-4. 3 positions are modified to N6-acetyllysine: Lys-12, Lys-15, and Lys-20. 2 beta stranded membrane passes run 26 to 35 (MVKIDLRTKS) and 39 to 47 (VEFSTSGHA). Lys-53 participates in a covalent cross-link: Glycyl lysine isopeptide (Lys-Gly) (interchain with G-Cter in ubiquitin). Beta stranded transmembrane passes span 54 to 64 (ASGNLETKYKI), 69 to 76 (LTFTQKWN), and 80 to 89 (TLGTEISLEN). Lys-90 carries the N6-acetyllysine modification. The chain crosses the membrane as a beta stranded span at residues 95 to 104 (LKLTLDTIFV). Residues Lys-109 and Lys-110 each participate in a glycyl lysine isopeptide (Lys-Gly) (interchain with G-Cter in ubiquitin) cross-link. Transmembrane regions (beta stranded) follow at residues 111 to 120 (SGKLKASYKR), 123 to 130 (FSIGSNVD), 137 to 145 (TIYGWAVLA), 150 to 158 (LAGYQMSFD), 163 to 175 (KLSQ…GYKA), 178 to 185 (FQLHTHVN), 189 to 198 (EFGGSIYQKV), 202 to 211 (IETSINLAWT), 218 to 227 (RFGIAAKYKL), and 231 to 238 (TSLSAKVN). Phosphoserine is present on Ser-241. Residues 242–244 (LIG) and 260–264 (SALID) each bind NAD(+). 2 beta stranded membrane-spanning segments follow: residues 242–251 (LIGLGYTQTL) and 254–263 (GVKLTLSALI). Position 266 is an N6-acetyllysine; alternate (Lys-266). A Glycyl lysine isopeptide (Lys-Gly) (interchain with G-Cter in ubiquitin); alternate cross-link involves residue Lys-266. Residues 273–282 (HKVGLGFELE) traverse the membrane as a beta stranded segment.

It belongs to the eukaryotic mitochondrial porin family. As to quaternary structure, interacts with ARMC12 in a TBC1D21-dependent manner. Interacts with MISFA. Post-translationally, ubiquitinated by PRKN during mitophagy, leading to its degradation and enhancement of mitophagy. Deubiquitinated by USP30.

The protein resides in the mitochondrion outer membrane. The protein localises to the membrane. The catalysed reaction is chloride(in) = chloride(out). It catalyses the reaction K(+)(in) = K(+)(out). Non-selective voltage-gated ion channel that mediates the transport of anions and cations through the mitochondrion outer membrane and plasma membrane. Forms a high-conducting channel with a stable open state and a voltage-induced closure with a mild preference for anions over cations. Involved in male fertility and sperm mitochondrial sheath formation. This chain is Non-selective voltage-gated ion channel VDAC3, found in Sus scrofa (Pig).